The chain runs to 340 residues: Eukaryotic translation initiation factor 3 subunit I (340 aa).

6 WD repeats span residues 8 to 47 (GHER…RLGT), 50 to 89 (GHQG…CVKV), 91 to 135 (DFPT…GEGN), 150 to 189 (CEQS…QLQN), 194 to 233 (EFDY…VMKT), and 291 to 330 (GHFG…FDFM).

This sequence belongs to the eIF-3 subunit I family. In terms of assembly, component of the eukaryotic translation initiation factor 3 (eIF-3) complex.

It localises to the cytoplasm. Component of the eukaryotic translation initiation factor 3 (eIF-3) complex, which is involved in protein synthesis of a specialized repertoire of mRNAs and, together with other initiation factors, stimulates binding of mRNA and methionyl-tRNAi to the 40S ribosome. The eIF-3 complex specifically targets and initiates translation of a subset of mRNAs involved in cell proliferation. This is Eukaryotic translation initiation factor 3 subunit I from Coccidioides immitis (strain RS) (Valley fever fungus).